Reading from the N-terminus, the 526-residue chain is Adenylyl cyclase-associated protein (526 aa).

Residues 1 to 168 form an adenyl cyclase-binding region; that stretch reads MPDSKYTMQG…RQSKYFAYLS (168 aa). Disordered regions lie at residues 43-72, 255-304, and 326-371; these read EASK…PEVE, QSTK…DANK, and KVDK…RPPR. Positions 45–64 are enriched in polar residues; sequence SKNNKPSDSGADANTTNEPS. The short motif at 169-369 is the SH3-binding element; it reads ALSEGAPLFS…KPSTLKTKRP (201 aa). Over residues 262-274 the composition is skewed to low complexity; sequence ATSSPSPASATAA. Residues 275–285 show a composition bias toward pro residues; the sequence is PAPPPPPPAPP. Residues 290 to 302 show a composition bias toward polar residues; that stretch reads EISNDTPATSSDA. Positions 326–338 are enriched in basic and acidic residues; the sequence is KVDKSQQTHKNPE. The span at 342–352 shows a compositional bias: low complexity; it reads SSTVSSTGSKS. Positions 354–361 are interaction with SH3 domain of ABP1; that stretch reads PPPRPKKP. Basic residues predominate over residues 357–370; that stretch reads RPKKPSTLKTKRPP. Residues 369–504 enclose the C-CAP/cofactor C-like domain; it reads PPRKELVGNK…EDDDYVEFPI (136 aa). A dimerization and actin-binding region spans residues 370–526; sequence PRKELVGNKW…FKSAVFEHAG (157 aa). Residue Ser-454 is modified to Phosphoserine.

This sequence belongs to the CAP family. Homodimer.

It localises to the cytoplasm. It is found in the cytoskeleton. The protein localises to the actin patch. In terms of biological role, the N-terminal domain binds to adenylyl cyclase, thereby enabling adenylyl cyclase to be activated by upstream regulatory signals, such as Ras. The C-terminal domain is required for normal cellular morphology and growth control. This Saccharomyces cerevisiae (strain ATCC 204508 / S288c) (Baker's yeast) protein is Adenylyl cyclase-associated protein (SRV2).